A 172-amino-acid polypeptide reads, in one-letter code: Photosystem I assembly protein Ycf3 (172 aa).

TPR repeat units lie at residues 35 to 70 (AFTY…EIDP), 74 to 107 (SYIL…NPFL), and 122 to 155 (GEQA…TPGN).

The protein belongs to the Ycf3 family.

It is found in the plastid. It localises to the chloroplast thylakoid membrane. Functionally, essential for the assembly of the photosystem I (PSI) complex. May act as a chaperone-like factor to guide the assembly of the PSI subunits. The sequence is that of Photosystem I assembly protein Ycf3 from Sorghum bicolor (Sorghum).